Reading from the N-terminus, the 66-residue chain is Conotoxin Ca5.2 (66 aa).

A signal peptide spans 1-22; it reads MRCVPVFLILLGLIASAPSVDA. Positions 23–48 are excised as a propeptide; the sequence is RPQTKDDALASFHDSAKRHLQRLVNA. Phenylalanine 62 is modified (phenylalanine amide).

It belongs to the conotoxin T superfamily. In terms of processing, contains 2 disulfide bonds that can be either 'C1-C3, C2-C4' or 'C1-C4, C2-C3', since these disulfide connectivities have been observed for conotoxins with cysteine framework V (for examples, see AC P0DQQ7 and AC P81755). As to expression, expressed by the venom duct.

The protein localises to the secreted. The chain is Conotoxin Ca5.2 from Conus caracteristicus (Characteristic cone).